We begin with the raw amino-acid sequence, 139 residues long: D-ribose pyranase (139 aa).

Histidine 20 acts as the Proton donor in catalysis. Substrate is bound by residues aspartate 28, histidine 106, and 128-130 (YAN).

It belongs to the RbsD / FucU family. RbsD subfamily. In terms of assembly, homodecamer.

The protein localises to the cytoplasm. It carries out the reaction beta-D-ribopyranose = beta-D-ribofuranose. The protein operates within carbohydrate metabolism; D-ribose degradation; D-ribose 5-phosphate from beta-D-ribopyranose: step 1/2. Catalyzes the interconversion of beta-pyran and beta-furan forms of D-ribose. This Escherichia coli O81 (strain ED1a) protein is D-ribose pyranase.